The chain runs to 107 residues: Thioredoxin-1 (107 aa).

Residues 2 to 106 enclose the Thioredoxin domain; sequence ASVRTMNDYH…LTNMMAKLVK (105 aa). Catalysis depends on nucleophile residues C31 and C34. An intrachain disulfide couples C31 to C34.

It belongs to the thioredoxin family. In terms of tissue distribution, ovary specific. Expressed present in the nurse cells from stage 9 of ovary development and is transported into the oocyte. Expressed throughout oogenesis.

The protein localises to the nucleus. Its function is as follows. Participates in various redox reactions through the reversible oxidation of its active center dithiol to a disulfide and catalyzes dithiol-disulfide exchange reactions. As a reducing substrate of peroxiredoxin 1, thioredoxin 2 is preferred over thioredoxin 1. Required for female meiosis and early embryonic development. In Drosophila melanogaster (Fruit fly), this protein is Thioredoxin-1 (dhd).